The chain runs to 450 residues: Transcription factor AP-2 gamma (450 aa).

A Glycyl lysine isopeptide (Lys-Gly) (interchain with G-Cter in SUMO) cross-link involves residue Lys10. Disordered stretches follow at residues 13–63 (EDCE…FPPP) and 90–126 (LHQP…GLLP). Residues 59-64 (YFPPPY) carry the PPxY motif motif. A compositionally biased stretch (polar residues) spans 95–110 (PTGSQQQAWPGRQSQE). Ser252 bears the Phosphoserine; by PKA mark. Residues 293 to 424 (RRKAAHVTLL…YIKEALIVID (132 aa)) are H-S-H (helix-span-helix), dimerization. Residues 431-450 (GDQSPADSNKTLEKMEKHRK) are disordered. Ser434 carries the post-translational modification Phosphoserine. Positions 440-450 (KTLEKMEKHRK) are enriched in basic and acidic residues.

Belongs to the AP-2 family. In terms of assembly, binds DNA as a dimer. Can form homodimers or heterodimers with other AP-2 family members. Interacts with WWOX. Interacts with UBE2I. Interacts with KCTD1; this interaction represses transcription activation. Interacts with CITED2 (via C-terminus); the interaction stimulates TFAP2B-transcriptional activity. Interacts with CITED4. Interacts with MTA1. In terms of processing, sumoylated on Lys-10; which inhibits transcriptional activity.

Its subcellular location is the nucleus. Its function is as follows. Sequence-specific DNA-binding transcription factor that interacts with cellular enhancer elements to regulate transcription of selected genes, and which plays a key role in early embryonic development. AP-2 factors bind to the consensus sequence 5'-GCCNNNGGC-3' and activate genes involved in a large spectrum of important biological functions. TFAP2C plays a key role in early embryonic development by regulating both inner cell mass (ICM) and trophectoderm differentiation. At the 8-cell stage, during morula development, controls expression of cell-polarity genes. Upon trophoblast commitment, binds to late trophectoderm genes in blastocysts together with CDX2, and later to extra-embryonic ectoderm genes together with SOX2. Binds to both closed and open chromatin with other transcription factors. Involved in the MTA1-mediated epigenetic regulation of ESR1 expression in breast cancer. The sequence is that of Transcription factor AP-2 gamma (TFAP2C) from Homo sapiens (Human).